A 520-amino-acid chain; its full sequence is O-methyltransferase cicE (520 aa).

S-adenosyl-L-methionine contacts are provided by residues 300-301 (GG), Asp-323, 355-356 (NF), and Arg-371.

The protein belongs to the class I-like SAM-binding methyltransferase superfamily. Cation-independent O-methyltransferase family.

It participates in phytotoxin biosynthesis. In terms of biological role, O-methyltransferase; part of the gene cluster that mediates the biosynthesis of cichorine, a phytotoxin active against knapweed, corn, and soybeans. The first step in the pathway is performed by the non-reducing polyketide synthase pkbA that condenses one acetyl-CoA starter unit with 3 malonyl-CoA units. PkbA also catalyzes one methylation step to produce 3-methylorsellinate. The nonribosomal peptide synthase-like protein cicB, the cytochrome P450 monooxygenase cicH and the O-methyltransferase cicE are involved in the conversion of 3-methylorsellinate into nidulol. CicB converts 3-methylorsellinate to a yet unidentified intermediate, cicH may play a ring-closing role for cichorine and cicE is plausibly responsible for the methylation of one of the phenol groups. The oxidoreductase cicC acts downstream with still unidentified enzymes to further convert nidulol into cichorine. In Emericella nidulans (strain FGSC A4 / ATCC 38163 / CBS 112.46 / NRRL 194 / M139) (Aspergillus nidulans), this protein is O-methyltransferase cicE.